An 85-amino-acid polypeptide reads, in one-letter code: DNA-directed RNA polymerase subunit omega (85 aa).

The protein belongs to the RNA polymerase subunit omega family. As to quaternary structure, the RNAP catalytic core consists of 2 alpha, 1 beta, 1 beta' and 1 omega subunit. When a sigma factor is associated with the core the holoenzyme is formed, which can initiate transcription.

The enzyme catalyses RNA(n) + a ribonucleoside 5'-triphosphate = RNA(n+1) + diphosphate. Functionally, promotes RNA polymerase assembly. Latches the N- and C-terminal regions of the beta' subunit thereby facilitating its interaction with the beta and alpha subunits. The polypeptide is DNA-directed RNA polymerase subunit omega (Tropheryma whipplei (strain TW08/27) (Whipple's bacillus)).